Reading from the N-terminus, the 529-residue chain is Peptide chain release factor 3 (529 aa).

The region spanning 11-280 (AKRRTFAIIS…GLVEWAPAPM (270 aa)) is the tr-type G domain. GTP-binding positions include 20-27 (SHPDAGKT), 88-92 (DTPGH), and 142-145 (NKLD).

Belongs to the TRAFAC class translation factor GTPase superfamily. Classic translation factor GTPase family. PrfC subfamily.

Its subcellular location is the cytoplasm. Its function is as follows. Increases the formation of ribosomal termination complexes and stimulates activities of RF-1 and RF-2. It binds guanine nucleotides and has strong preference for UGA stop codons. It may interact directly with the ribosome. The stimulation of RF-1 and RF-2 is significantly reduced by GTP and GDP, but not by GMP. This is Peptide chain release factor 3 from Yersinia enterocolitica serotype O:8 / biotype 1B (strain NCTC 13174 / 8081).